We begin with the raw amino-acid sequence, 236 residues long: Sugar fermentation stimulation protein homolog (236 aa).

It belongs to the SfsA family.

In Proteus mirabilis (strain HI4320), this protein is Sugar fermentation stimulation protein homolog.